We begin with the raw amino-acid sequence, 99 residues long: MNQERVFKVLLGPHISEKATGLADGKSQFVFKVATDATKLEIKKAVESLFSVKVQRVTTLNVKGKTKRTARGLGKRNDWKKAYIALQPGQDLDFATSAE.

It belongs to the universal ribosomal protein uL23 family. As to quaternary structure, part of the 50S ribosomal subunit. Contacts protein L29, and trigger factor when it is bound to the ribosome.

Its function is as follows. One of the early assembly proteins it binds 23S rRNA. One of the proteins that surrounds the polypeptide exit tunnel on the outside of the ribosome. Forms the main docking site for trigger factor binding to the ribosome. The chain is Large ribosomal subunit protein uL23 from Pseudomonas aeruginosa (strain LESB58).